The chain runs to 73 residues: Cell division protein ZapB (73 aa).

Positions 3 to 67 (LELLSKLETK…WNDKVTGLVG (65 aa)) form a coiled coil.

This sequence belongs to the ZapB family. As to quaternary structure, homodimer. The ends of the coiled-coil dimer bind to each other, forming polymers. Interacts with FtsZ.

The protein localises to the cytoplasm. Functionally, non-essential, abundant cell division factor that is required for proper Z-ring formation. It is recruited early to the divisome by direct interaction with FtsZ, stimulating Z-ring assembly and thereby promoting cell division earlier in the cell cycle. Its recruitment to the Z-ring requires functional FtsA or ZipA. This chain is Cell division protein ZapB, found in Shewanella sp. (strain MR-4).